The following is an 812-amino-acid chain: Probable E3 ubiquitin-protein ligase hulA (812 aa).

Residues 1-109 enclose the C2 domain; that stretch reads MTCSQPNLRV…QMGGDEMLTR (109 aa). 2 disordered regions span residues 131-235 and 250-350; these read NLST…WERR and RTTT…YFVD. Polar residues-rich tracts occupy residues 148–165, 174–199, 214–223, and 250–267; these read MQPS…ASTP, ADPT…STIV, SRTNLSSFED, and RTTT…QTSR. One can recognise a WW 1 domain in the interval 226 to 259; it reads GRLPAGWERREDNLGRTYYVDHNTRTTTWTRPSN. Residues 276 to 291 are compositionally biased toward basic and acidic residues; that stretch reads LERRAHQSRMLPEDRT. Polar residues predominate over residues 292 to 306; that stretch reads GASSPNLQENQQQAQ. The span at 307–330 shows a compositional bias: low complexity; sequence TPPAGGSASAVSMMATGATTAGTG. 2 WW domains span residues 330-363 and 390-423; these read GELP…DPRR and GPLP…DPRL. The HECT domain maps to 479-812; that stretch reads SASDLKKRLM…VEETLGFGQE (334 aa). C780 (glycyl thioester intermediate) is an active-site residue.

This sequence belongs to the RSP5/NEDD4 family. Interacts with creD.

It is found in the cytoplasm. The enzyme catalyses S-ubiquitinyl-[E2 ubiquitin-conjugating enzyme]-L-cysteine + [acceptor protein]-L-lysine = [E2 ubiquitin-conjugating enzyme]-L-cysteine + N(6)-ubiquitinyl-[acceptor protein]-L-lysine.. It participates in protein modification; protein ubiquitination. E3 ubiquitin-protein ligase which accepts ubiquitin from an E2 ubiquitin-conjugating enzyme in the form of a thioester and then directly transfers the ubiquitin to targeted substrates. Probably involved in the regulatory network controlling carbon source utilization. This Aspergillus flavus (strain ATCC 200026 / FGSC A1120 / IAM 13836 / NRRL 3357 / JCM 12722 / SRRC 167) protein is Probable E3 ubiquitin-protein ligase hulA (hulA).